The following is a 196-amino-acid chain: Small heat shock protein C3 (196 aa).

In terms of domain architecture, sHSP spans Ser-88–Gln-196.

The protein belongs to the small heat shock protein (HSP20) family.

The sequence is that of Small heat shock protein C3 (hspc3-1) from Rickettsia felis (strain ATCC VR-1525 / URRWXCal2) (Rickettsia azadi).